A 339-amino-acid chain; its full sequence is Undecaprenyl-phosphate 4-deoxy-4-formamido-L-arabinose transferase (339 aa).

Helical transmembrane passes span 235-255 (LSLVGGGMALAGFLFALFLLV) and 269-289 (LFVLFAVLFMFSGVQLLGMGL).

This sequence belongs to the glycosyltransferase 2 family.

It localises to the cell inner membrane. It carries out the reaction UDP-4-deoxy-4-formamido-beta-L-arabinose + di-trans,octa-cis-undecaprenyl phosphate = 4-deoxy-4-formamido-alpha-L-arabinopyranosyl di-trans,octa-cis-undecaprenyl phosphate + UDP. It functions in the pathway glycolipid biosynthesis; 4-amino-4-deoxy-alpha-L-arabinose undecaprenyl phosphate biosynthesis; 4-amino-4-deoxy-alpha-L-arabinose undecaprenyl phosphate from UDP-4-deoxy-4-formamido-beta-L-arabinose and undecaprenyl phosphate: step 1/2. The protein operates within bacterial outer membrane biogenesis; lipopolysaccharide biosynthesis. Catalyzes the transfer of 4-deoxy-4-formamido-L-arabinose from UDP to undecaprenyl phosphate. The modified arabinose is attached to lipid A and is required for resistance to polymyxin and cationic antimicrobial peptides. The chain is Undecaprenyl-phosphate 4-deoxy-4-formamido-L-arabinose transferase from Pseudomonas aeruginosa (strain LESB58).